A 403-amino-acid polypeptide reads, in one-letter code: Na(+)/H(+) antiporter NhaH (403 aa).

Topologically, residues 1 to 6 are cytoplasmic; that stretch reads MHGFHD. Residues 7-27 form a helical membrane-spanning segment; that stretch reads VFIQILLLLAISVSVIAIAKL. The Extracellular portion of the chain corresponds to 28-30; the sequence is LKE. Residues 31–51 traverse the membrane as a helical segment; the sequence is PDSIALVLVGLVLGLTELPII. The Cytoplasmic segment spans residues 52–65; the sequence is EDAERYITQSEVFQ. Residues 66–86 form a helical membrane-spanning segment; it reads ATIISLFLPILLGDATLKLPF. Over 87–98 the chain is Extracellular; sequence HHLFSQKKTVLG. A helical transmembrane segment spans residues 99–119; that stretch reads LAFVGTFVSSICIGTAAYFLL. Topologically, residues 120-124 are cytoplasmic; sequence DLPLA. A helical membrane pass occupies residues 125-145; it reads VAFTFAALMSATDPISVLSIF. Topologically, residues 146-167 are extracellular; the sequence is KSLGVPQKMSTVMEGESLFNDG. A helical transmembrane segment spans residues 168 to 188; it reads IAVVLFKIASIYLLTYMEMGW. Residues 189–195 lie on the Cytoplasmic side of the membrane; it reads AGLGSGV. A helical transmembrane segment spans residues 196–216; it reads FLFLKFAIGGALVGLVLGYFF. Residues 217–218 lie on the Extracellular side of the membrane; it reads SQ. Residues 219–239 traverse the membrane as a helical segment; that stretch reads VIRVFDDYPLEVAFSALLFFG. Residues 240–241 lie on the Cytoplasmic side of the membrane; it reads SY. Residues 242–262 form a helical membrane-spanning segment; it reads FIAEHFHTSGVIAVVVGGFVF. At 263-281 the chain is on the extracellular side; it reads GDYGAKIGMSKETKTNINT. Residues 282 to 302 traverse the membrane as a helical segment; it reads FWDSVTLIANALIFLMVGLEI. Over 303 to 310 the chain is Cytoplasmic; sequence RNIDLAGN. Residues 311–331 traverse the membrane as a helical segment; sequence WGVIVGAILIVLVGRTIAVYL. Residues 332–372 lie on the Extracellular side of the membrane; it reads GTGWVQELSSKERLLINWGGLRGSLSVALALSLPMDFAGRD. A helical transmembrane segment spans residues 373-393; the sequence is QVLLLTFSVVLFSLIVQGLTL. Over 394–403 the chain is Cytoplasmic; that stretch reads KPLIKKLGMI.

The protein belongs to the monovalent cation:proton antiporter 1 (CPA1) transporter (TC 2.A.36) family.

It is found in the cell membrane. In terms of biological role, na(+)/H(+) antiporter that extrudes sodium in exchange for external protons. Can also transport lithium. The sequence is that of Na(+)/H(+) antiporter NhaH (nhaH) from Halobacillus dabanensis.